The sequence spans 84 residues: RQC P-site tRNA stabilizing factor (84 aa).

One can recognise an S4 RNA-binding domain in the interval 1–64 (MRIDKFLQSV…IEEYTILQIP (64 aa)).

It belongs to the RqcP family. In terms of assembly, associates with stalled 50S ribosomal subunits. Binds to RqcH, 23S rRNA and the P-site tRNA. Does not require RqcH for association with 50S subunits.

Its function is as follows. Key component of the ribosome quality control system (RQC), a ribosome-associated complex that mediates the extraction of incompletely synthesized nascent chains from stalled ribosomes and their subsequent degradation. RqcH recruits Ala-charged tRNA, and with RqcP directs the elongation of stalled nascent chains on 50S ribosomal subunits, leading to non-templated C-terminal alanine extensions (Ala tail). The Ala tail promotes nascent chain degradation. RqcP is associated with the translocation-like movement of the peptidyl-tRNA from the A-site into the P-site. This is RQC P-site tRNA stabilizing factor from Helicobacter pylori (strain J99 / ATCC 700824) (Campylobacter pylori J99).